The following is a 340-amino-acid chain: Ferredoxin--NADP reductase (340 aa).

FAD is bound by residues D33, Q41, Y46, A86, F120, D286, and T327.

Belongs to the ferredoxin--NADP reductase type 2 family. As to quaternary structure, homodimer. Requires FAD as cofactor.

It carries out the reaction 2 reduced [2Fe-2S]-[ferredoxin] + NADP(+) + H(+) = 2 oxidized [2Fe-2S]-[ferredoxin] + NADPH. The sequence is that of Ferredoxin--NADP reductase from Rickettsia rickettsii (strain Sheila Smith).